A 251-amino-acid polypeptide reads, in one-letter code: Triosephosphate isomerase (251 aa).

9-11 (NWK) is a binding site for substrate. The active-site Electrophile is His93. Glu163 serves as the catalytic Proton acceptor. Substrate contacts are provided by residues Gly169, Ser209, and 230–231 (GG).

Belongs to the triosephosphate isomerase family. As to quaternary structure, homodimer.

It localises to the cytoplasm. It carries out the reaction D-glyceraldehyde 3-phosphate = dihydroxyacetone phosphate. It participates in carbohydrate biosynthesis; gluconeogenesis. The protein operates within carbohydrate degradation; glycolysis; D-glyceraldehyde 3-phosphate from glycerone phosphate: step 1/1. Involved in the gluconeogenesis. Catalyzes stereospecifically the conversion of dihydroxyacetone phosphate (DHAP) to D-glyceraldehyde-3-phosphate (G3P). In Ruegeria pomeroyi (strain ATCC 700808 / DSM 15171 / DSS-3) (Silicibacter pomeroyi), this protein is Triosephosphate isomerase.